Consider the following 484-residue polypeptide: Adenylosuccinate synthetase, chloroplastic (484 aa).

The transit peptide at 1–44 directs the protein to the chloroplast; the sequence is MSLSTLSHPAAAAAGSGKSLFPAGPAAQSVHFPKARLPVPAAVS. GTP contacts are provided by residues 71–77 and 99–101; these read GDEGKGK and GHT. D72 functions as the Proton acceptor in the catalytic mechanism. Residues D72 and G99 each contribute to the Mg(2+) site. IMP contacts are provided by residues 72–75, 97–100, T189, R203, Q283, T298, and R362; these read DEGK and NAGH. The Proton donor role is filled by H100. Position 358-364 (358-364) interacts with substrate; sequence TTTGRPR. Residues R364, 390–392, and 473–475 each bind GTP; these read KLD and GVG.

Belongs to the adenylosuccinate synthetase family. In terms of assembly, homodimer. Mg(2+) serves as cofactor.

It localises to the plastid. Its subcellular location is the chloroplast. It catalyses the reaction IMP + L-aspartate + GTP = N(6)-(1,2-dicarboxyethyl)-AMP + GDP + phosphate + 2 H(+). It functions in the pathway purine metabolism; AMP biosynthesis via de novo pathway; AMP from IMP: step 1/2. In terms of biological role, plays an important role in the de novo pathway and in the salvage pathway of purine nucleotide biosynthesis. Catalyzes the first committed step in the biosynthesis of AMP from IMP. The polypeptide is Adenylosuccinate synthetase, chloroplastic (Zea mays (Maize)).